The chain runs to 179 residues: Protein GrpE (179 aa).

The segment at 1-22 is disordered; it reads MTDNNIENNEEEIRKAPSANDR. A compositionally biased stretch (basic and acidic residues) spans 11–22; sequence EEIRKAPSANDR.

It belongs to the GrpE family. As to quaternary structure, homodimer.

The protein localises to the cytoplasm. Its function is as follows. Participates actively in the response to hyperosmotic and heat shock by preventing the aggregation of stress-denatured proteins, in association with DnaK and GrpE. It is the nucleotide exchange factor for DnaK and may function as a thermosensor. Unfolded proteins bind initially to DnaJ; upon interaction with the DnaJ-bound protein, DnaK hydrolyzes its bound ATP, resulting in the formation of a stable complex. GrpE releases ADP from DnaK; ATP binding to DnaK triggers the release of the substrate protein, thus completing the reaction cycle. Several rounds of ATP-dependent interactions between DnaJ, DnaK and GrpE are required for fully efficient folding. This is Protein GrpE from Rickettsia canadensis (strain McKiel).